Here is a 360-residue protein sequence, read N- to C-terminus: Putative transport protein BU123 (360 aa).

The next 9 helical transmembrane spans lie at 18–38 (IFIVSMGVISFLVIHPFILGF), 39–59 (FWASMIVIATWPLMLKIQKIL), 66–86 (AVIIMIIILLLLFIIPVFFLV), 161–181 (GLFIVHSILMLFFSALLYWNG), 204–224 (LLLATQAVRAVALGVAVTALI), 230–250 (GIGLLVSGVPYWALLMIIIFF), 251–271 (SCLIQLGPLPILIPSIIWLYW), 280–300 (ILLIWSCFVFILDHILRPFFI), and 316–336 (IGGLLTFGMIGLFIGPVVLVI).

The protein belongs to the autoinducer-2 exporter (AI-2E) (TC 2.A.86) family.

It is found in the cell membrane. The chain is Putative transport protein BU123 from Buchnera aphidicola subsp. Acyrthosiphon pisum (strain APS) (Acyrthosiphon pisum symbiotic bacterium).